The primary structure comprises 899 residues: Protein translocase subunit SecA (899 aa).

ATP contacts are provided by residues glutamine 87, 105-109 (GEGKT), and aspartate 516. Positions 884, 886, 895, and 896 each coordinate Zn(2+).

The protein belongs to the SecA family. As to quaternary structure, monomer and homodimer. Part of the essential Sec protein translocation apparatus which comprises SecA, SecYEG and auxiliary proteins SecDF. Other proteins may also be involved. It depends on Zn(2+) as a cofactor.

The protein localises to the cell inner membrane. It is found in the cytoplasm. The enzyme catalyses ATP + H2O + cellular proteinSide 1 = ADP + phosphate + cellular proteinSide 2.. Its function is as follows. Part of the Sec protein translocase complex. Interacts with the SecYEG preprotein conducting channel. Has a central role in coupling the hydrolysis of ATP to the transfer of proteins into and across the cell membrane, serving as an ATP-driven molecular motor driving the stepwise translocation of polypeptide chains across the membrane. This Borreliella burgdorferi (strain ZS7) (Borrelia burgdorferi) protein is Protein translocase subunit SecA.